The following is a 178-amino-acid chain: ATP synthase subunit delta (178 aa).

This sequence belongs to the ATPase delta chain family. F-type ATPases have 2 components, F(1) - the catalytic core - and F(0) - the membrane proton channel. F(1) has five subunits: alpha(3), beta(3), gamma(1), delta(1), epsilon(1). F(0) has three main subunits: a(1), b(2) and c(10-14). The alpha and beta chains form an alternating ring which encloses part of the gamma chain. F(1) is attached to F(0) by a central stalk formed by the gamma and epsilon chains, while a peripheral stalk is formed by the delta and b chains.

The protein localises to the cell inner membrane. F(1)F(0) ATP synthase produces ATP from ADP in the presence of a proton or sodium gradient. F-type ATPases consist of two structural domains, F(1) containing the extramembraneous catalytic core and F(0) containing the membrane proton channel, linked together by a central stalk and a peripheral stalk. During catalysis, ATP synthesis in the catalytic domain of F(1) is coupled via a rotary mechanism of the central stalk subunits to proton translocation. In terms of biological role, this protein is part of the stalk that links CF(0) to CF(1). It either transmits conformational changes from CF(0) to CF(1) or is implicated in proton conduction. The protein is ATP synthase subunit delta of Pseudomonas syringae pv. tomato (strain ATCC BAA-871 / DC3000).